The following is a 144-amino-acid chain: Large ribosomal subunit protein uL15 (144 aa).

A disordered region spans residues Met1–Gln52. The segment covering Glu15 to Gly26 has biased composition (basic residues).

This sequence belongs to the universal ribosomal protein uL15 family. In terms of assembly, part of the 50S ribosomal subunit.

Its function is as follows. Binds to the 23S rRNA. This Mycoplasmopsis agalactiae (strain NCTC 10123 / CIP 59.7 / PG2) (Mycoplasma agalactiae) protein is Large ribosomal subunit protein uL15.